A 598-amino-acid chain; its full sequence is EF-hand and coiled-coil domain-containing protein 1 (598 aa).

The tract at residues 1-22 (MEPVSTGAEAGMEGAGGDPYRR) is disordered. The EF-hand domain occupies 54–89 (GLDQYLQEVFHHLDCRGAGRLPRADFRALCAVLGLR). 3 disordered regions span residues 96-127 (AGQAAGDGNSRDVTPGDAAAELATDGDSDTDE), 175-198 (RLRRPRRRRRPPCAPGPDSGPDCE), and 326-411 (YRSE…KKTP). Positions 175–185 (RLRRPRRRRRP) are enriched in basic residues. Residues 196–303 (DCERVARLEE…RSLHRVRELE (108 aa)) adopt a coiled-coil conformation. A compositionally biased stretch (basic and acidic residues) spans 343 to 359 (PGDKSNEPEDAGTRDPD). Over residues 394-404 (SDEEEVEEERW) the composition is skewed to acidic residues. Residues 479–533 (TSEEEAELQQKVEENEHLRLELQMVETERVRLSLLEEKLVDVLQLLQRLRDLNIS) adopt a coiled-coil conformation.

This Homo sapiens (Human) protein is EF-hand and coiled-coil domain-containing protein 1 (EFCC1).